Reading from the N-terminus, the 463-residue chain is Asparagine--tRNA ligase (463 aa).

The protein belongs to the class-II aminoacyl-tRNA synthetase family. Homodimer.

The protein localises to the cytoplasm. It carries out the reaction tRNA(Asn) + L-asparagine + ATP = L-asparaginyl-tRNA(Asn) + AMP + diphosphate + H(+). In Clostridium kluyveri (strain ATCC 8527 / DSM 555 / NBRC 12016 / NCIMB 10680 / K1), this protein is Asparagine--tRNA ligase.